A 500-amino-acid chain; its full sequence is Cobyric acid synthase (500 aa).

A GATase cobBQ-type domain is found at 255–444 (AIDIAVIRCP…MHDLFHNDAF (190 aa)). The active-site Nucleophile is C337. Residue H436 is part of the active site.

Belongs to the CobB/CobQ family. CobQ subfamily.

Its pathway is cofactor biosynthesis; adenosylcobalamin biosynthesis. In terms of biological role, catalyzes amidations at positions B, D, E, and G on adenosylcobyrinic A,C-diamide. NH(2) groups are provided by glutamine, and one molecule of ATP is hydrogenolyzed for each amidation. This Geobacillus thermodenitrificans (strain NG80-2) protein is Cobyric acid synthase.